The following is a 222-amino-acid chain: UPF0758 protein YicR (222 aa).

One can recognise an MPN domain in the interval 100-222 (PLLSPEMTRE…YVSFAERGWI (123 aa)). Positions 171, 173, and 184 each coordinate Zn(2+). The JAMM motif motif lies at 171-184 (HNHPSGCAEPSKAD).

It belongs to the UPF0758 family. YicR subfamily.

This chain is UPF0758 protein YicR, found in Escherichia coli (strain 55989 / EAEC).